An 819-amino-acid polypeptide reads, in one-letter code: NEDD4-binding protein 1 (819 aa).

Positions 1–13 are enriched in polar residues; the sequence is MASGSVQSSSGNG. A disordered region spans residues 1–20; it reads MASGSVQSSSGNGRRQAAVV. Residues 80 to 164 form the KH-like domain; that stretch reads KQAVRRAKEY…VQQFIALFKD (85 aa). Positions 226–241 are enriched in basic and acidic residues; the sequence is DDKAECKVNQKDEVSR. Disordered regions lie at residues 226–247 and 666–736; these read DDKA…AGTP and KLDD…MAPR. One can recognise an RNase NYN domain in the interval 517–669; that stretch reads LKHIIIDGSN…LGRYGPKLDD (153 aa). The span at 673–689 shows a compositional bias: polar residues; the sequence is KQPNNRTVHSSFPSSNE. Residues 772 to 819 form a coCUN region; it reads RSPSETMQLKEALLKIFPEADQRHKINEILTAHPFMRDLNALSAMVLD.

It belongs to the N4BP1 family.

It localises to the cytoplasm. Its subcellular location is the cytosol. It is found in the nucleus. The protein resides in the nucleolus. The protein localises to the PML body. Potent suppressor of cytokine production that acts as a regulator of innate immune signaling and inflammation. Acts as a key negative regulator of select cytokine and chemokine responses elicited by TRIF-independent Toll-like receptors (TLRs), thereby limiting inflammatory cytokine responses to minor insults. Has ribonuclease activity. The protein is NEDD4-binding protein 1 of Xenopus tropicalis (Western clawed frog).